Consider the following 415-residue polypeptide: Esterase FrsA (415 aa).

This sequence belongs to the FrsA family.

It carries out the reaction a carboxylic ester + H2O = an alcohol + a carboxylate + H(+). In terms of biological role, catalyzes the hydrolysis of esters. The polypeptide is Esterase FrsA (Yersinia enterocolitica serotype O:8 / biotype 1B (strain NCTC 13174 / 8081)).